The chain runs to 2298 residues: Non-reducing polyketide synthase pgmA (2298 aa).

The interval 8 to 333 (LFIFGDQTLD…IYNVLKQSPL (326 aa)) is N-terminal acylcarrier protein transacylase domain (SAT). A disordered region spans residues 336 to 361 (YLSSKPAQSRQPVSNEGAPEPGNGRQ). Residues 340-349 (KPAQSRQPVS) are compositionally biased toward polar residues. The 439-residue stretch at 360–798 (RQKLAIIGMS…GGNSALLVED (439 aa)) folds into the Ketosynthase family 3 (KS3) domain. Active-site for beta-ketoacyl synthase activity residues include C532, H667, and H714. The acyl/malonyl transferases stretch occupies residues 901-1193 (VFAFTGQGAH…GMVKGVLGPQ (293 aa)). Residue S994 is the For acyl/malonyl transferase activity of the active site. The N-terminal hotdog fold stretch occupies residues 1283 to 1415 (HRVVEETHDS…CVVRFRDRGL (133 aa)). The 307-residue stretch at 1283–1589 (HRVVEETHDS…IQGVPRRVLK (307 aa)) folds into the PKS/mFAS DH domain. Residues 1294–1586 (KTRIVIEADI…QISIQGVPRR (293 aa)) form a product template (PT) domainn region. H1315 (proton acceptor; for dehydratase activity) is an active-site residue. The C-terminal hotdog fold stretch occupies residues 1438–1589 (VTGETARFNR…IQGVPRRVLK (152 aa)). The Proton donor; for dehydratase activity role is filled by D1502. Positions 1619–1642 (YPVANGHAQATPTSGPVNGEPRPS) are disordered. Residues 1641–1716 (PSRFPRALEI…SLRALLSEPE (76 aa)) form the Carrier 1 domain. S1675 bears the O-(pantetheine 4'-phosphoryl)serine mark. Positions 1716 to 1762 (ERSTNGMPAASAKDTSRFDEIPPMNGHKTNGHVMNGHSNGSSNGLPD) are disordered. Residues 1751 to 1760 (GHSNGSSNGL) are compositionally biased toward polar residues. The Carrier 2 domain occupies 1765–1840 (KVDFQRVLQI…DLKRYLFPQD (76 aa)). S1799 carries the O-(pantetheine 4'-phosphoryl)serine modification. The tract at residues 1927–2178 (VTGASGSLGG…YWTPVEEVAG (252 aa)) is reductase (R) domain.

The protein operates within pigment biosynthesis. Its pathway is secondary metabolite biosynthesis. Its function is as follows. Non-reducing polyketide synthase; part of the gene cluster that mediates the biosynthesis of pleosporalin A, ascomycone A, as well as a third cryptic naphthoquinone derived pigment, all responsible for the coloration of conidia. The non-reducing polyketide synthase pgmA is responsible for the condensation of seven acetyl-CoA units to produce the cyclized heptaketide 3-acetonyl-1,6,8-trihydroxy-2-naphthaldehyde. The pathway begins with the biosynthesis of the cyclized heptaketide 3-acetonyl-1,6,8-trihydroxy-2-naphthaldehyde by the NR-PKS pgmA. The C-6 hydroxyl group is further methylated by the O-methyltransferase pgmB to yield fusarubinaldehyde which is in turn oxidized by the cytochrome P450 monooxygenase pgmC at C-9. The C-1 hydroxyl group is then methylated spontaneously. Although pgmE, pgmD and pgmH are essential for the production of pleosporalin A, it is not the case for the 2 other final products and it remains difficult to assign a specific function to each enzyme. PgmF and pgmG seem not to be involved in pigment biosynthesis although they were regulated by the cluster-specific transcription factor pgmR. This Aspergillus terreus (strain NIH 2624 / FGSC A1156) protein is Non-reducing polyketide synthase pgmA.